A 147-amino-acid polypeptide reads, in one-letter code: D-aminoacyl-tRNA deacylase (147 aa).

The short motif at 136 to 137 (GP) is the Gly-cisPro motif, important for rejection of L-amino acids element.

This sequence belongs to the DTD family. Homodimer.

The protein localises to the cytoplasm. The enzyme catalyses glycyl-tRNA(Ala) + H2O = tRNA(Ala) + glycine + H(+). It catalyses the reaction a D-aminoacyl-tRNA + H2O = a tRNA + a D-alpha-amino acid + H(+). Its function is as follows. An aminoacyl-tRNA editing enzyme that deacylates mischarged D-aminoacyl-tRNAs. Also deacylates mischarged glycyl-tRNA(Ala), protecting cells against glycine mischarging by AlaRS. Acts via tRNA-based rather than protein-based catalysis; rejects L-amino acids rather than detecting D-amino acids in the active site. By recycling D-aminoacyl-tRNA to D-amino acids and free tRNA molecules, this enzyme counteracts the toxicity associated with the formation of D-aminoacyl-tRNA entities in vivo and helps enforce protein L-homochirality. The polypeptide is D-aminoacyl-tRNA deacylase (Sulfurihydrogenibium sp. (strain YO3AOP1)).